The primary structure comprises 338 residues: Serine/threonine-protein kinase YabT (338 aa).

The Protein kinase domain maps to 28 to 286; that stretch reads YTLRKQLGKG…PIKASPQPAT (259 aa). ATP contacts are provided by residues 34–42 and Lys55; that span reads LGKGANGIV. The active-site Proton acceptor is the Asp148. The tract at residues 266–312 is disordered; sequence DAGQKAAQRKQPIKASPQPATRQRQQKPRQGKITKTRYTPKQKPAKS. Basic residues predominate over residues 289–309; sequence RQQKPRQGKITKTRYTPKQKP.

This sequence belongs to the protein kinase superfamily. Ser/Thr protein kinase family. Autophosphorylated.

The catalysed reaction is L-seryl-[protein] + ATP = O-phospho-L-seryl-[protein] + ADP + H(+). It catalyses the reaction L-threonyl-[protein] + ATP = O-phospho-L-threonyl-[protein] + ADP + H(+). Plays a role in the cell's commitment to sporulation; phosphorylates DNA replication initiation-control protein YabA. Deletion of this kinase delays entry into sporulation but does not affect final spore yield. Overexpression decreases biofilm formation; phosphorylation of YabA probably prevents biofilm formation. This is Serine/threonine-protein kinase YabT (yabT) from Bacillus subtilis (strain 168).